The primary structure comprises 147 residues: Small ribosomal subunit protein uS12 (147 aa).

The protein belongs to the universal ribosomal protein uS12 family. In terms of assembly, part of the 30S ribosomal subunit.

Its function is as follows. With S4 and S5 plays an important role in translational accuracy. Located at the interface of the 30S and 50S subunits. The protein is Small ribosomal subunit protein uS12 of Thermococcus celer.